The following is a 284-amino-acid chain: Aquaporin NIP1-1 (284 aa).

Over residues 1–12 (MAGGDNNSQTTN) the composition is skewed to polar residues. Residues 1–28 (MAGGDNNSQTTNGGSGHEQRAMEEGRKQ) form a disordered region. Residues 17–28 (HEQRAMEEGRKQ) are compositionally biased toward basic and acidic residues. 2 consecutive transmembrane segments (helical) span residues 50-70 (IIAE…AVTI) and 78-98 (ITFP…VYAV). Positions 107–109 (NPA) match the NPA 1 motif. 3 helical membrane-spanning segments follow: residues 129–149 (AAAQ…MFGG), 166–186 (SLVL…GVAT), and 194–214 (LAGL…GPIS). The NPA 2 motif lies at 219–221 (NPA). The helical transmembrane segment at 236-256 (IWVYIVGPVAGAVAGAWAYNI) threads the bilayer.

This sequence belongs to the MIP/aquaporin (TC 1.A.8) family. NIP (TC 1.A.8.12) subfamily. As to expression, expressed in leaves and at lower levels in roots and anthers.

It is found in the membrane. In terms of biological role, aquaporins facilitate the transport of water and small neutral solutes across cell membranes. This is Aquaporin NIP1-1 (NIP1-1) from Oryza sativa subsp. japonica (Rice).